Reading from the N-terminus, the 275-residue chain is MGIRTYRPYTPGTRQASVSDFADITKPKPEKSLTTYKHNKKGRNNRGVITSRHRGGGHKRLYRIVDFKRDKYGVPAKVAAIEYDPNRNARIALLFYQDGEKRYILAPAGITVGTEVISGEDSPFEVGNALPLYKIPLGTEVHNIELVAGKGGQMVRAAGAAAQVVAKEGDYVTLRLPSKEVRMVRKECYATIGRVGNTEARNIKLGKAGRTRHLGRRPHVRGSVMNPVDHPHGGGEGRAPVGRSGPMTPWGKPALGAKTRNKKKASSRLIVRRRR.

2 disordered regions span residues 1-55 (MGIR…RHRG) and 218-275 (PHVR…RRRR). The segment covering 259-275 (TRNKKKASSRLIVRRRR) has biased composition (basic residues).

It belongs to the universal ribosomal protein uL2 family. In terms of assembly, part of the 50S ribosomal subunit. Forms a bridge to the 30S subunit in the 70S ribosome.

In terms of biological role, one of the primary rRNA binding proteins. Required for association of the 30S and 50S subunits to form the 70S ribosome, for tRNA binding and peptide bond formation. It has been suggested to have peptidyltransferase activity; this is somewhat controversial. Makes several contacts with the 16S rRNA in the 70S ribosome. This chain is Large ribosomal subunit protein uL2, found in Crocosphaera subtropica (strain ATCC 51142 / BH68) (Cyanothece sp. (strain ATCC 51142)).